We begin with the raw amino-acid sequence, 229 residues long: Uracil-DNA glycosylase (229 aa).

D64 acts as the Proton acceptor in catalysis.

Belongs to the uracil-DNA glycosylase (UDG) superfamily. UNG family.

It is found in the cytoplasm. The enzyme catalyses Hydrolyzes single-stranded DNA or mismatched double-stranded DNA and polynucleotides, releasing free uracil.. Excises uracil residues from the DNA which can arise as a result of misincorporation of dUMP residues by DNA polymerase or due to deamination of cytosine. This chain is Uracil-DNA glycosylase, found in Escherichia coli O7:K1 (strain IAI39 / ExPEC).